An 874-amino-acid chain; its full sequence is Probable inorganic carbon transporter subunit DabA (874 aa).

The Zn(2+) site is built by Cys-398, Asp-400, His-580, and Cys-595.

The protein belongs to the inorganic carbon transporter (TC 9.A.2) DabA family. Forms a complex with DabB. The cofactor is Zn(2+).

The protein localises to the cell membrane. Part of an energy-coupled inorganic carbon pump. In Bacillus cereus (strain Q1), this protein is Probable inorganic carbon transporter subunit DabA.